We begin with the raw amino-acid sequence, 266 residues long: Undecaprenyl-diphosphatase (266 aa).

8 helical membrane-spanning segments follow: residues 1–21 (MDTF…FLPI), 39–59 (QGLS…VIYF), 87–107 (WWII…KDFI), 111–131 (LRSA…LWWA), 149–169 (ALLI…RSGA), 183–203 (AAAR…AILV), 218–238 (ALTL…HYFL), and 246–266 (MTPF…FIFL).

Belongs to the UppP family.

The protein localises to the cell inner membrane. The catalysed reaction is di-trans,octa-cis-undecaprenyl diphosphate + H2O = di-trans,octa-cis-undecaprenyl phosphate + phosphate + H(+). In terms of biological role, catalyzes the dephosphorylation of undecaprenyl diphosphate (UPP). Confers resistance to bacitracin. In Shewanella sp. (strain MR-4), this protein is Undecaprenyl-diphosphatase.